We begin with the raw amino-acid sequence, 135 residues long: Ribosome-binding factor A (135 aa).

This sequence belongs to the RbfA family. As to quaternary structure, monomer. Binds 30S ribosomal subunits, but not 50S ribosomal subunits or 70S ribosomes.

Its subcellular location is the cytoplasm. One of several proteins that assist in the late maturation steps of the functional core of the 30S ribosomal subunit. Associates with free 30S ribosomal subunits (but not with 30S subunits that are part of 70S ribosomes or polysomes). Required for efficient processing of 16S rRNA. May interact with the 5'-terminal helix region of 16S rRNA. This Aliivibrio salmonicida (strain LFI1238) (Vibrio salmonicida (strain LFI1238)) protein is Ribosome-binding factor A.